Reading from the N-terminus, the 127-residue chain is UPF0251 protein Ccel_0627 (127 aa).

The protein belongs to the UPF0251 family.

This chain is UPF0251 protein Ccel_0627, found in Ruminiclostridium cellulolyticum (strain ATCC 35319 / DSM 5812 / JCM 6584 / H10) (Clostridium cellulolyticum).